The chain runs to 739 residues: Protein NPGR2 (739 aa).

The segment at 32–71 is disordered; sequence EQMRHREEEDKKSEVGVGRDYNGSSALSTAESENAKKLDN. Over residues 33 to 45 the composition is skewed to basic and acidic residues; that stretch reads QMRHREEEDKKSE. Over residues 53–63 the composition is skewed to polar residues; it reads NGSSALSTAES. 9 TPR repeats span residues 90–127, 162–195, 215–248, 465–498, 500–533, 536–569, 592–625, 626–659, and 697–733; these read EEAR…KMKT, FEAI…VETS, TKAV…HWKL, PRVV…GAES, LEVW…TGKW, GKLL…LQVQ, LGTW…APYS, SVRY…DPMH, and HSAW…EETM.

In terms of assembly, interacts with calmodulin in a calcium-dependent manner. As to expression, expressed in pollen, flowers and fruits.

The sequence is that of Protein NPGR2 from Arabidopsis thaliana (Mouse-ear cress).